A 146-amino-acid polypeptide reads, in one-letter code: Hemoglobin subunit beta (146 aa).

The residue at position 1 (V1) is an N-acetylvaline. The Globin domain occupies 2–146; that stretch reads HLTGEEKSAV…VANALAHKYH (145 aa). T12 is subject to Phosphothreonine. S44 bears the Phosphoserine mark. K59 bears the N6-acetyllysine mark. H63 provides a ligand contact to heme b. K82 bears the N6-acetyllysine mark. H92 contacts heme b. The residue at position 93 (C93) is an S-nitrosocysteine. K144 bears the N6-acetyllysine mark.

The protein belongs to the globin family. In terms of assembly, heterotetramer of two alpha chains and two beta chains. In terms of tissue distribution, red blood cells.

Its function is as follows. Involved in oxygen transport from the lung to the various peripheral tissues. In Saguinus oedipus (Cotton-top tamarin), this protein is Hemoglobin subunit beta (HBB).